Reading from the N-terminus, the 303-residue chain is Taste receptor type 2 member 13 (303 aa).

Over 1–7 the chain is Extracellular; the sequence is MESALPS. The chain crosses the membrane as a helical span at residues 8 to 28; the sequence is IFTLVIIAEFIIGNLSNGFIV. Residues 29 to 55 lie on the Cytoplasmic side of the membrane; sequence LINCIDWVSKRELSSVDKLLIILAISR. The chain crosses the membrane as a helical span at residues 56-76; sequence IGLIWEILVSWFLALHSLAIF. Over 77–85 the chain is Extracellular; sequence VSGTGLRIM. A helical membrane pass occupies residues 86–106; that stretch reads IFSWIVSNHFNLWLATILSIF. Topologically, residues 107-128 are cytoplasmic; that stretch reads YLLKIASFSSPAFLYLKRRVNK. The helical transmembrane segment at 129–149 threads the bilayer; sequence VILMILLGTLVFLFLNLIQIN. The Extracellular portion of the chain corresponds to 150 to 184; it reads MLIKDWLDRYERNTTWNFSMSDFETFSVSVRFTMT. Residues Asn-162 and Asn-166 are each glycosylated (N-linked (GlcNAc...) asparagine). A helical membrane pass occupies residues 185-205; the sequence is MFSLTPFTVAFISFLLLVFSL. Residues 206–232 lie on the Cytoplasmic side of the membrane; sequence QKHLQKMQLNYKGHRDPRTKVHTNALK. A helical transmembrane segment spans residues 233-253; that stretch reads IVISFLLFYASFFLSILISWI. Topologically, residues 254-261 are extracellular; that stretch reads SELYQNTV. Residues 262–282 traverse the membrane as a helical segment; that stretch reads IYMLCETIGAFYPSSHSFLLI. Topologically, residues 283–303 are cytoplasmic; the sequence is LGNAKLRQAFLLVAAKVWAKR.

It belongs to the G-protein coupled receptor T2R family.

The protein localises to the membrane. Receptor that may play a role in the perception of bitterness and is gustducin-linked. May play a role in sensing the chemical composition of the gastrointestinal content. The activity of this receptor may stimulate alpha gustducin, mediate PLC-beta-2 activation and lead to the gating of TRPM5. In Pan paniscus (Pygmy chimpanzee), this protein is Taste receptor type 2 member 13 (TAS2R13).